A 185-amino-acid chain; its full sequence is MILGLGNPGLEFSLTRHNVGFSLLDRIISKNGLFLKRKKKYEYSEMRMISGRVILVKPLTYMNLSGSLFPSIFSDFYMCIKNLLVVLDNVDLPLGKCRLKERGGASTHNGLKSISSILGSSNYSRLYIGVGSNVMRDIKSFVLSRFCKDEIDRLEKLYDFLSDELIDISEANFKNKVQKINSSNF.

Phenylalanine 12 lines the tRNA pocket. The active-site Proton acceptor is the histidine 17. TRNA-binding residues include tyrosine 61, asparagine 63, and asparagine 109.

Belongs to the PTH family. Monomer.

It localises to the cytoplasm. It carries out the reaction an N-acyl-L-alpha-aminoacyl-tRNA + H2O = an N-acyl-L-amino acid + a tRNA + H(+). In terms of biological role, hydrolyzes ribosome-free peptidyl-tRNAs (with 1 or more amino acids incorporated), which drop off the ribosome during protein synthesis, or as a result of ribosome stalling. Its function is as follows. Catalyzes the release of premature peptidyl moieties from peptidyl-tRNA molecules trapped in stalled 50S ribosomal subunits, and thus maintains levels of free tRNAs and 50S ribosomes. The polypeptide is Peptidyl-tRNA hydrolase (Borrelia garinii subsp. bavariensis (strain ATCC BAA-2496 / DSM 23469 / PBi) (Borreliella bavariensis)).